Consider the following 290-residue polypeptide: Feruloyl esterase D (290 aa).

The N-terminal stretch at 1–25 is a signal peptide; that stretch reads MAGLHSRLTTFLLLLLSALPAIAAA. The segment at 260-280 is disordered; it reads HGGDHNPSQRDPGQNDPFAPR.

It belongs to the serine esterase family.

Its subcellular location is the secreted. The enzyme catalyses feruloyl-polysaccharide + H2O = ferulate + polysaccharide.. Functionally, involved in degradation of plant cell walls. Hydrolyzes the feruloyl-arabinose ester bond in arabinoxylans as well as the feruloyl-galactose and feruloyl-arabinose ester bonds in pectin. Active against methyl esters of ferulate (MFA), sinapate (MSA), caffeate (MCA) and p-coumarate (MpCA). This Neurospora crassa (strain ATCC 24698 / 74-OR23-1A / CBS 708.71 / DSM 1257 / FGSC 987) protein is Feruloyl esterase D.